The following is a 349-amino-acid chain: MNITSKIGAIAAAGAVGLGLTACGAGDTAANSDTKRIGVTVYDMSSFITEGKEGMDTYAKANNIELVWNSANNDVSTQASQVDSLINQGVDAIIVVPVQADSLGPQVASAKSKGIPLLAVNAALETPDLAGNVQPDDVAAGAQEMQMMADRLGGKGNIVILQGPLGGSGEINRGKGIDQVLAKYPDIKVLAKDTANWKRDEAVNKMKNWISSFGPQIDGVVAQNDDMGLGALQALKEAGRTGVPIVGIDGIEDGLNAVKSGDFIGTSLQNGTVELSAGLAVADALVKGEDVKTDPVYVMPAITKDNVDVAIEHVVTERQKFLDGLVELTQQNLKTGDIAYEGIPGQTQP.

A signal peptide spans 1–22 (MNITSKIGAIAAAGAVGLGLTA). Cys-23 carries N-palmitoyl cysteine lipidation. The S-diacylglycerol cysteine moiety is linked to residue Cys-23. 6 residues coordinate xylitol: Tyr-42, Asn-121, Arg-173, Asn-224, Asp-249, and Gln-269.

This sequence belongs to the bacterial solute-binding protein 2 family.

The protein resides in the cell membrane. Part of an ABC transporter complex likely involved in xylitol import. Binds xylitol. This is Xylitol-binding protein from Mycolicibacterium smegmatis (strain ATCC 700084 / mc(2)155) (Mycobacterium smegmatis).